The sequence spans 489 residues: Rhamnulokinase (489 aa).

13 to 17 (ASSGR) serves as a coordination point for ATP. A disulfide bridge connects residues cysteine 68 and cysteine 222. Substrate contacts are provided by residues glycine 83 and 236-238 (HDT). The active-site Proton acceptor is the aspartate 237. Residue threonine 259 participates in ATP binding. Residue asparagine 296 coordinates substrate. Residue glutamine 304 participates in ATP binding. Cysteine 353 and cysteine 370 are disulfide-bonded. Residue glycine 402 coordinates ATP. Cysteines 413 and 417 form a disulfide.

The protein belongs to the rhamnulokinase family. The cofactor is Mg(2+).

It carries out the reaction L-rhamnulose + ATP = L-rhamnulose 1-phosphate + ADP + H(+). Its pathway is carbohydrate degradation; L-rhamnose degradation; glycerone phosphate from L-rhamnose: step 2/3. Involved in the catabolism of L-rhamnose (6-deoxy-L-mannose). Catalyzes the transfer of the gamma-phosphate group from ATP to the 1-hydroxyl group of L-rhamnulose to yield L-rhamnulose 1-phosphate. This chain is Rhamnulokinase, found in Salmonella paratyphi A (strain AKU_12601).